We begin with the raw amino-acid sequence, 109 residues long: Parvalbumin beta 2 (109 aa).

Ala-2 is modified (N-acetylalanine). EF-hand domains are found at residues 39-74 and 78-109; these read KSPA…FSAG and LSDA…MIKA. Ca(2+)-binding residues include Asp-52, Asp-54, Ser-56, Phe-58, Glu-60, Glu-63, Asp-91, Asp-93, Asp-95, Lys-97, and Glu-102.

It belongs to the parvalbumin family. Monomer.

In muscle, parvalbumin is thought to be involved in relaxation after contraction. It binds two calcium ions. This chain is Parvalbumin beta 2, found in Gadus morhua (Atlantic cod).